An 85-amino-acid polypeptide reads, in one-letter code: Large ribosomal subunit protein bL27 (85 aa).

Residues M1 to R20 are disordered.

It belongs to the bacterial ribosomal protein bL27 family.

The polypeptide is Large ribosomal subunit protein bL27 (Azotobacter vinelandii (strain DJ / ATCC BAA-1303)).